The chain runs to 683 residues: Protein kinase C eta type (683 aa).

The C2 domain maps to 1–118; that stretch reads MSSGTMKFNG…LRTTGASDTF (118 aa). Residues Ser-28 and Ser-32 each carry the phosphoserine; by autocatalysis modification. 2 Phorbol-ester/DAG-type zinc fingers span residues 171-222 and 245-295; these read GHKF…VTAC and PHKF…APNC. The residue at position 317 (Ser-317) is a Phosphoserine. The segment at 320 to 342 is disordered; the sequence is SKLVSRSTLRRQGKESSKEGNGI. One can recognise a Protein kinase domain in the interval 355 to 614; that stretch reads FEFIRVLGKG…EHAILRHPFF (260 aa). Residues 361-369 and Lys-384 each bind ATP; that span reads LGKGSFGKV. Asp-479 serves as the catalytic Proton acceptor. Position 513 is a phosphothreonine; by PDPK1 (Thr-513). The AGC-kinase C-terminal domain maps to 615–683; the sequence is KEIDWAQLNH…FSYVSPELQP (69 aa). Thr-656 bears the Phosphothreonine mark. At Ser-675 the chain carries Phosphoserine.

This sequence belongs to the protein kinase superfamily. AGC Ser/Thr protein kinase family. PKC subfamily. Interacts with FYN. Interacts with RALA. Interacts with DGKQ. Interacts with PRKCH upstream open reading frame 2; the interaction leads to inhibition of kinase activity. Most abundant in lung, less in heart and skin.

The protein resides in the cytoplasm. It carries out the reaction L-seryl-[protein] + ATP = O-phospho-L-seryl-[protein] + ADP + H(+). It catalyses the reaction L-threonyl-[protein] + ATP = O-phospho-L-threonyl-[protein] + ADP + H(+). With respect to regulation, novel PKCs (PRKCD, PRKCE, PRKCH and PRKCQ) are calcium-insensitive, but activated by diacylglycerol (DAG) and phosphatidylserine. Three specific sites; Thr-513 (activation loop of the kinase domain), Thr-656 (turn motif) and Ser-675 (hydrophobic region), need to be phosphorylated for its full activation. Inhibited by PRKCH upstream open reading frame 2. Its function is as follows. Calcium-independent, phospholipid- and diacylglycerol (DAG)-dependent serine/threonine-protein kinase that is involved in the regulation of cell differentiation in keratinocytes and pre-B cell receptor, mediates regulation of epithelial tight junction integrity and foam cell formation, and is required for glioblastoma proliferation and apoptosis prevention in MCF-7 cells. In keratinocytes, binds and activates the tyrosine kinase FYN, which in turn blocks epidermal growth factor receptor (EGFR) signaling and leads to keratinocyte growth arrest and differentiation. Associates with the cyclin CCNE1-CDK2-CDKN1B complex and inhibits CDK2 kinase activity, leading to RB1 dephosphorylation and thereby G1 arrest in keratinocytes. In association with RALA activates actin depolymerization, which is necessary for keratinocyte differentiation. In the pre-B cell receptor signaling, functions downstream of BLNK by up-regulating IRF4, which in turn activates L chain gene rearrangement. Regulates epithelial tight junctions (TJs) by phosphorylating occludin (OCLN) on threonine residues, which is necessary for the assembly and maintenance of TJs. In association with PLD2 and via TLR4 signaling, is involved in lipopolysaccharide (LPS)-induced RGS2 down-regulation and foam cell formation. Upon PMA stimulation, mediates glioblastoma cell proliferation by activating the mTOR pathway, the PI3K/AKT pathway and the ERK1-dependent phosphorylation of ELK1. Involved in the protection of glioblastoma cells from irradiation-induced apoptosis by preventing caspase-9 activation. In camptothecin-treated MCF-7 cells, regulates NF-kappa-B upstream signaling by activating IKBKB, and confers protection against DNA damage-induced apoptosis. Promotes oncogenic functions of ATF2 in the nucleus while blocking its apoptotic function at mitochondria. Phosphorylates ATF2 which promotes its nuclear retention and transcriptional activity and negatively regulates its mitochondrial localization. This is Protein kinase C eta type (PRKCH) from Homo sapiens (Human).